Here is a 238-residue protein sequence, read N- to C-terminus: Succinate dehydrogenase assembly factor 2, mitochondrial (238 aa).

Positions Gly47–Ser82 are disordered. The segment covering Lys68 to Thr80 has biased composition (basic and acidic residues).

The protein belongs to the SDHAF2 family. Interacts with the flavoprotein subunit within the SDH catalytic dimer.

The protein localises to the mitochondrion matrix. Its function is as follows. Plays an essential role in the assembly of succinate dehydrogenase (SDH), an enzyme complex (also referred to as respiratory complex II) that is a component of both the tricarboxylic acid (TCA) cycle and the mitochondrial electron transport chain, and which couples the oxidation of succinate to fumarate with the reduction of ubiquinone (coenzyme Q) to ubiquinol. Required for flavinylation (covalent attachment of FAD) of the flavoprotein subunit of the SDH catalytic dimer. The protein is Succinate dehydrogenase assembly factor 2, mitochondrial of Mycosarcoma maydis (Corn smut fungus).